The following is a 366-amino-acid chain: tRNA-specific 2-thiouridylase MnmA (366 aa).

Residues 6–13 (AMSGGVDS) and L32 each bind ATP. Residue C101 is the Nucleophile of the active site. Cysteines 101 and 199 form a disulfide. G125 contacts ATP. Residues 148 to 150 (KDQ) are interaction with tRNA. The Cysteine persulfide intermediate role is filled by C199.

This sequence belongs to the MnmA/TRMU family.

Its subcellular location is the cytoplasm. The enzyme catalyses S-sulfanyl-L-cysteinyl-[protein] + uridine(34) in tRNA + AH2 + ATP = 2-thiouridine(34) in tRNA + L-cysteinyl-[protein] + A + AMP + diphosphate + H(+). In terms of biological role, catalyzes the 2-thiolation of uridine at the wobble position (U34) of tRNA, leading to the formation of s(2)U34. This chain is tRNA-specific 2-thiouridylase MnmA, found in Leifsonia xyli subsp. xyli (strain CTCB07).